The sequence spans 464 residues: Phospho-2-dehydro-3-deoxyheptonate aldolase AroG (464 aa).

Position 87 (Cys-87) interacts with Mn(2+). Phosphoenolpyruvate-binding positions include Arg-126, Glu-285 to Arg-286, Lys-308, and Arg-339. Mn(2+) contacts are provided by His-371, Glu-413, and Asp-443.

This sequence belongs to the class-II DAHP synthase family. Homodimer. Probably interacts with MSMEG_5536. The cofactor is Mn(2+). Co(2+) is required as a cofactor. Requires Cd(2+) as cofactor.

It catalyses the reaction D-erythrose 4-phosphate + phosphoenolpyruvate + H2O = 7-phospho-2-dehydro-3-deoxy-D-arabino-heptonate + phosphate. It functions in the pathway metabolic intermediate biosynthesis; chorismate biosynthesis; chorismate from D-erythrose 4-phosphate and phosphoenolpyruvate: step 1/7. Catalyzes an aldol-like condensation reaction between phosphoenolpyruvate (PEP) and D-erythrose 4-phosphate (E4P) to generate 3-deoxy-D-arabino-heptulosonate 7-phosphate (DAH7P) and inorganic phosphate. The sequence is that of Phospho-2-dehydro-3-deoxyheptonate aldolase AroG (aroG) from Mycolicibacterium smegmatis (strain ATCC 700084 / mc(2)155) (Mycobacterium smegmatis).